The chain runs to 879 residues: Alanine--tRNA ligase (879 aa).

H566, H570, C668, and H672 together coordinate Zn(2+).

Belongs to the class-II aminoacyl-tRNA synthetase family. Requires Zn(2+) as cofactor.

The protein resides in the cytoplasm. It carries out the reaction tRNA(Ala) + L-alanine + ATP = L-alanyl-tRNA(Ala) + AMP + diphosphate. Functionally, catalyzes the attachment of alanine to tRNA(Ala) in a two-step reaction: alanine is first activated by ATP to form Ala-AMP and then transferred to the acceptor end of tRNA(Ala). Also edits incorrectly charged Ser-tRNA(Ala) and Gly-tRNA(Ala) via its editing domain. This Clostridium beijerinckii (strain ATCC 51743 / NCIMB 8052) (Clostridium acetobutylicum) protein is Alanine--tRNA ligase.